We begin with the raw amino-acid sequence, 329 residues long: MQFIDYAEIEVEGGKGGDGIVAFRREKYVPAGGPAGGNGGWGGSVIFVANSNLQTLLDFRYARRFKADDGKRGGPNNCTGANGKDCLVEVPCGTMVYNLETEEILGDLVENGQTLCVAAGGKGGLGNKHFLSNQNRAPDYALPGLEGEHRWLRLELKLLAEVGIIGLPNAGKSTLMASLSAARPKIADYPFTTLVPNLGVVRKPTGDGTVFADIPGLIEGAHEGIGLGHEFLRHIERTRLLLHLVDITSPDPVKDYQIIQQELEAYGRGLSDRPQIIALNKMDAADEETFLLIKNELTHLSSSPIIGISGVSRTGLEDLLQIVWQLLDS.

Residues 1 to 159 (MQFIDYAEIE…RWLRLELKLL (159 aa)) enclose the Obg domain. In terms of domain architecture, OBG-type G spans 160 to 328 (AEVGIIGLPN…LLQIVWQLLD (169 aa)). GTP contacts are provided by residues 166 to 173 (GLPNAGKS), 191 to 195 (FTTLV), 213 to 216 (DIPG), 280 to 283 (NKMD), and 309 to 311 (SGV). Mg(2+)-binding residues include serine 173 and threonine 193.

The protein belongs to the TRAFAC class OBG-HflX-like GTPase superfamily. OBG GTPase family. Monomer. The cofactor is Mg(2+).

It is found in the cytoplasm. An essential GTPase which binds GTP, GDP and possibly (p)ppGpp with moderate affinity, with high nucleotide exchange rates and a fairly low GTP hydrolysis rate. Plays a role in control of the cell cycle, stress response, ribosome biogenesis and in those bacteria that undergo differentiation, in morphogenesis control. In Rippkaea orientalis (strain PCC 8801 / RF-1) (Cyanothece sp. (strain PCC 8801)), this protein is GTPase Obg.